We begin with the raw amino-acid sequence, 1213 residues long: DNA-directed RNA polymerase subunit beta' (1213 aa).

4 residues coordinate Zn(2+): Cys-60, Cys-62, Cys-75, and Cys-78. Mg(2+) is bound by residues Asp-450, Asp-452, and Asp-454. Zn(2+) is bound by residues Cys-819, Cys-893, Cys-900, and Cys-903.

The protein belongs to the RNA polymerase beta' chain family. The RNAP catalytic core consists of 2 alpha, 1 beta, 1 beta' and 1 omega subunit. When a sigma factor is associated with the core the holoenzyme is formed, which can initiate transcription. The cofactor is Mg(2+). Zn(2+) serves as cofactor.

The enzyme catalyses RNA(n) + a ribonucleoside 5'-triphosphate = RNA(n+1) + diphosphate. Its function is as follows. DNA-dependent RNA polymerase catalyzes the transcription of DNA into RNA using the four ribonucleoside triphosphates as substrates. This chain is DNA-directed RNA polymerase subunit beta', found in Streptococcus pyogenes serotype M18 (strain MGAS8232).